A 337-amino-acid chain; its full sequence is Aspartate carbamoyltransferase catalytic subunit (337 aa).

Carbamoyl phosphate-binding residues include arginine 54 and threonine 55. Residue lysine 82 coordinates L-aspartate. Arginine 104, histidine 134, and glutamine 137 together coordinate carbamoyl phosphate. 2 residues coordinate L-aspartate: arginine 177 and arginine 232. Carbamoyl phosphate contacts are provided by glycine 277 and proline 278.

The protein belongs to the aspartate/ornithine carbamoyltransferase superfamily. ATCase family. As to quaternary structure, heterododecamer (2C3:3R2) of six catalytic PyrB chains organized as two trimers (C3), and six regulatory PyrI chains organized as three dimers (R2).

It carries out the reaction carbamoyl phosphate + L-aspartate = N-carbamoyl-L-aspartate + phosphate + H(+). The protein operates within pyrimidine metabolism; UMP biosynthesis via de novo pathway; (S)-dihydroorotate from bicarbonate: step 2/3. In terms of biological role, catalyzes the condensation of carbamoyl phosphate and aspartate to form carbamoyl aspartate and inorganic phosphate, the committed step in the de novo pyrimidine nucleotide biosynthesis pathway. The polypeptide is Aspartate carbamoyltransferase catalytic subunit (Arthrobacter sp. (strain FB24)).